A 433-amino-acid chain; its full sequence is Tol-Pal system protein TolB (433 aa).

Residues 1-26 (MSLMTKLGFRALVASCLIAAGGAAHA) form the signal peptide.

Belongs to the TolB family. As to quaternary structure, the Tol-Pal system is composed of five core proteins: the inner membrane proteins TolA, TolQ and TolR, the periplasmic protein TolB and the outer membrane protein Pal. They form a network linking the inner and outer membranes and the peptidoglycan layer.

It localises to the periplasm. Its function is as follows. Part of the Tol-Pal system, which plays a role in outer membrane invagination during cell division and is important for maintaining outer membrane integrity. This is Tol-Pal system protein TolB from Burkholderia thailandensis (strain ATCC 700388 / DSM 13276 / CCUG 48851 / CIP 106301 / E264).